The primary structure comprises 604 residues: MCRHQPRARLSPDEQLAAEESFALYCKPVELYNIIQRRSIKNPAFLQRCLLYKIHARRKKRSLITISLSGGTNKELRAQNIFPLYVLLARPTNNVSLEGHSPIYRFSRACLLTSFHEFGNKDYTEATFVIPDVKNLATSRACSLNIILISCGRAEQTFDDNNCSGNHVEGSTLQKLEGKCFWGKIPIDLLASSLGNCVSLSLGHTVEMSSTVEMTPSFLEPKFLEDDSCLTFCSQKVDATGSFQLQVSISAQEAGAKDMSESPYSVYSYNDVPPSSLTHIIRLRSGNVLFNYKYYNNTMQKTEVTEDFSCPFCLVPCGSFKGLGCHLNASHDLFHYEFWISEECQAVNVSLKTDSWRTELLAEGVDPRHQTFSYRSRFKKRKRVEISSDKIRHVHPHIVDSGSPEDAQAGSEDDYVQRENGSSVAHASVDPANSLHGSNLSAPTVLQFGKTRKLSVERADPRNRQLLQKRQFFHSHRAQPMALEQVFSDRDSEDEVDDDIADFEDRRMLDDFVDVTKDEKLIMHMWNSFVRKQRVLADGHIPWACEAFSQFHGQELVQNPALLWCWRFFMVKLWNHSLLDARAMNACNTILEGYLNGSSDPKKN.

The C2H2-type zinc finger occupies 310–331 (CPFCLVPCGSFKGLGCHLNASH). The segment at 396 to 440 (PHIVDSGSPEDAQAGSEDDYVQRENGSSVAHASVDPANSLHGSNL) is disordered. A VEFS-box region spans residues 454 to 589 (LSVERADPRN…DARAMNACNT (136 aa)).

The protein belongs to the VEFS (VRN2-EMF2-FIS2-SU(Z)12) family. Component of the polycomb repressive complex 2 (PRC2), composed of the core PRC2 components FIE2, EZ1 and CLF. PRC2 methylates 'Lys-27' residues of histone H3 (H3K27me3), leading to transcriptional repression of the affected target gene. As to expression, widely expressed.

Its function is as follows. Polycomb group (PcG) protein. PcG proteins act by forming multiprotein complexes, which are required to maintain the transcriptionally repressive state of homeotic genes throughout development. PcG proteins are not required to initiate repression, but to maintain it during later stages of development. They act via the methylation of histones, rendering chromatin heritably changed in its expressibility. Polycomb group (PcG) protein involved in the repression of flowering under long day (LD) conditions. Regulates floret development. This is Polycomb group protein EMF2B from Oryza sativa subsp. japonica (Rice).